Consider the following 348-residue polypeptide: Terpene cyclase ctvD (348 aa).

A helical membrane pass occupies residues 2–22 (ALSAYFLLCLSVLGLDAIYGF). Asn-51 is a glycosylation site (N-linked (GlcNAc...) asparagine). 7 helical membrane passes run 77–97 (PGLS…WVAI), 116–136 (LFAM…WCAI), 161–181 (LIPI…LLPE), 191–211 (QIAI…HWGL), 235–255 (FAFV…LTLI), 283–303 (GLWF…LWAM), and 323–343 (LKVG…WLLW).

It belongs to the membrane-bound ascI terpene cyclase family.

The protein localises to the membrane. Its pathway is mycotoxin biosynthesis. Hydrolase; part of the gene cluster that mediates the biosynthesis of citreoviridin, an inhibitor of the of F1-ATPase beta-subunit. The HR-PKS ctvA accepts acetyl-CoA as the starter unit and catalyzes eight iterations of malonyl-CoA extension and four iterations of SAM-dependent methylation at C4, C12, C14, and C16. The KR and DH domains selectively act on the first six iterations to generate the hexaene chain. In the last three iterations, the KR and DH domains terminate their functions to yield a beta,delta-diketo ester moiety, which then undergoes intramolecular cyclization to yield an alpha-pyrone intermediate. Subsequently, ctvB methylates the alpha-pyrone hydroxyl group to generate citreomontanin. In order to form the tetrahydrofuran ring with the correct stereochemistry, the terminal alkenes of citreomontanin need to undergo isomerization to yield a (17Z)-hexaene, a step that could be catalyzed by ctvC. The (17Z)-hexaene then undergoes bisepoxidation by ctvC to form a (17R,16R,15S,14R)-bisepoxide moiety. Lastly, ctvD acts as a regioselective hydrolase to form the tetrahydrofuran ring with the substituents in the correct absolute configuration, completing the biosynthesis of citreoviridin. This Aspergillus terreus (strain NIH 2624 / FGSC A1156) protein is Terpene cyclase ctvD.